A 129-amino-acid chain; its full sequence is Small ribosomal subunit protein uS11 (129 aa).

The protein belongs to the universal ribosomal protein uS11 family. Part of the 30S ribosomal subunit. Interacts with proteins S7 and S18. Binds to IF-3.

Located on the platform of the 30S subunit, it bridges several disparate RNA helices of the 16S rRNA. Forms part of the Shine-Dalgarno cleft in the 70S ribosome. This is Small ribosomal subunit protein uS11 from Phocaeicola vulgatus (strain ATCC 8482 / DSM 1447 / JCM 5826 / CCUG 4940 / NBRC 14291 / NCTC 11154) (Bacteroides vulgatus).